A 348-amino-acid chain; its full sequence is MLFLKLVASVLALMTIVPAQAGLIGKRSVFKPKVMIINMFSLEANAWLSQMDDLYANNITVVGLNRLYPQVHCNTQQTICQMTTGEGKSNAASSIMALTLSPKFDLTETFFLISGIAGINPYAASLGSVGVARFAVDIDLINSVDLRELPSYFQSSGWEIDTDPYENGSSNEIVYPESMPYQTNLYELNNTLITAAMEIIKDVVLEDNEKAASYRKLYNESAARRPPFITQCDTATGDNYWAGTYMGDFVSNITNVLTNSTGHYCTTQQEDNASLTALTRASFDGLVNINRVVIMRSGSDFDRGAGNITALANLLNSTGHVSSLACDNLYHAGAPLIDHIVNHWSYWT.

The first 21 residues, 1–21 (MLFLKLVASVLALMTIVPAQA), serve as a signal peptide directing secretion.

This sequence belongs to the NUP family.

It localises to the endoplasmic reticulum. Its function is as follows. Probable nucleoside permease that transports adenosine and guanosine. This Schizosaccharomyces pombe (strain 972 / ATCC 24843) (Fission yeast) protein is Probable purine nucleoside permease C285.05.